Here is a 192-residue protein sequence, read N- to C-terminus: uncharacterized protein (192 aa).

Residues 29–160 (QRQAAVLVPI…PLDIHRRGND (132 aa)) enclose the Nudix hydrolase domain. Positions 67 to 89 (GAVDNTDATLIAAALREAQEEVA) match the Nudix box motif. Mg(2+) is bound by residues E83 and E87.

Belongs to the Nudix hydrolase family. PCD1 subfamily. The cofactor is Mn(2+). Mg(2+) is required as a cofactor.

Functionally, probably mediates the hydrolysis of some nucleoside diphosphate derivatives. This is an uncharacterized protein from Klebsiella pneumoniae subsp. pneumoniae (strain ATCC 700721 / MGH 78578).